We begin with the raw amino-acid sequence, 373 residues long: tRNA (guanine(26)-N(2))-dimethyltransferase (373 aa).

Residues 2-365 (KIISEGETKL…AELSDLVVLI (364 aa)) form the Trm1 methyltransferase domain. S-adenosyl-L-methionine-binding residues include R35, R66, D86, D113, and A114.

This sequence belongs to the class I-like SAM-binding methyltransferase superfamily. Trm1 family.

The catalysed reaction is guanosine(26) in tRNA + 2 S-adenosyl-L-methionine = N(2)-dimethylguanosine(26) in tRNA + 2 S-adenosyl-L-homocysteine + 2 H(+). Its function is as follows. Dimethylates a single guanine residue at position 26 of a number of tRNAs using S-adenosyl-L-methionine as donor of the methyl groups. This chain is tRNA (guanine(26)-N(2))-dimethyltransferase, found in Methanococcus maripaludis (strain C6 / ATCC BAA-1332).